Here is a 297-residue protein sequence, read N- to C-terminus: MKNKSSRTRVAILGSGSIGLDLMFKVKASEHFDLKFVVGRHANSDGLKLARSCNVETSSDGLDFLKENEDAYDLVFDATSAAAHKVNNGFFSGAGKFVIDLTPAKLGRLCVPCINLDDIGAEQNVNLITCGGQASLPLAYALKQAVDEIEYLEVVSAIASRSAGIATRENIDEYMTTTEYALAQFSGAKKTKAILNINPAEPGVRMQTTLYAHARYRDFDRVRACVAEMVEKVREYVPGYRLVVEPIESQGRITISLTVRGRGDYLPEYAGNLDIINCAALAVASHRHATARLGATQ.

Residue 15 to 18 (SGSI) coordinates NAD(+). Cys-130 (acyl-thioester intermediate) is an active-site residue. NAD(+)-binding positions include 162–170 (SAGIATREN) and Asn-272.

This sequence belongs to the acetaldehyde dehydrogenase family.

It catalyses the reaction acetaldehyde + NAD(+) + CoA = acetyl-CoA + NADH + H(+). The sequence is that of Acetaldehyde dehydrogenase (mhpF) from Burkholderia thailandensis (strain ATCC 700388 / DSM 13276 / CCUG 48851 / CIP 106301 / E264).